Here is a 247-residue protein sequence, read N- to C-terminus: ATP synthase subunit a, chloroplastic (247 aa).

Helical transmembrane passes span 38–58 (QVLI…TLAV), 95–115 (VPFI…GALL), 134–154 (INTT…AGLS), 199–219 (LVVV…VMFL), and 220–240 (GLFT…AYIG).

The protein belongs to the ATPase A chain family. F-type ATPases have 2 components, CF(1) - the catalytic core - and CF(0) - the membrane proton channel. CF(1) has five subunits: alpha(3), beta(3), gamma(1), delta(1), epsilon(1). CF(0) has four main subunits: a, b, b' and c.

Its subcellular location is the plastid. The protein localises to the chloroplast thylakoid membrane. Key component of the proton channel; it plays a direct role in the translocation of protons across the membrane. This Lactuca sativa (Garden lettuce) protein is ATP synthase subunit a, chloroplastic.